The following is a 188-amino-acid chain: Auxin-induced protein 22C (188 aa).

An EAR-like (transcriptional repression) motif is present at residues 13–17 (LRLGL). The disordered stretch occupies residues 16–57 (GLPGAGGENNTDKDKNKNKKRVFSDIEGENSSSEEDGKKETK). The PB1 domain maps to 79 to 167 (KLYVKVSMDG…KRLRIMKRSD (89 aa)).

The protein belongs to the Aux/IAA family. Homodimers and heterodimers.

The protein localises to the nucleus. Its function is as follows. Aux/IAA proteins are short-lived transcriptional factors that function as repressors of early auxin response genes at low auxin concentrations. Repression is thought to result from the interaction with auxin response factors (ARFs), proteins that bind to the auxin-responsive promoter element (AuxRE). Formation of heterodimers with ARF proteins may alter their ability to modulate early auxin response genes expression. This Vigna radiata var. radiata (Mung bean) protein is Auxin-induced protein 22C (AUX22C).